Reading from the N-terminus, the 274-residue chain is 4-diphosphocytidyl-2-C-methyl-D-erythritol kinase (274 aa).

The active site involves Lys-14. Residue 94-104 participates in ATP binding; sequence PMQAGLGGGSS. Residue Asp-134 is part of the active site.

The protein belongs to the GHMP kinase family. IspE subfamily.

The enzyme catalyses 4-CDP-2-C-methyl-D-erythritol + ATP = 4-CDP-2-C-methyl-D-erythritol 2-phosphate + ADP + H(+). Its pathway is isoprenoid biosynthesis; isopentenyl diphosphate biosynthesis via DXP pathway; isopentenyl diphosphate from 1-deoxy-D-xylulose 5-phosphate: step 3/6. Functionally, catalyzes the phosphorylation of the position 2 hydroxy group of 4-diphosphocytidyl-2C-methyl-D-erythritol. The sequence is that of 4-diphosphocytidyl-2-C-methyl-D-erythritol kinase from Thermosipho melanesiensis (strain DSM 12029 / CIP 104789 / BI429).